We begin with the raw amino-acid sequence, 177 residues long: Protein YOP1 (177 aa).

Topologically, residues 1–35 (MADVISSLQTQLKELDTKFAGNNVLNQLEQRTNLP) are cytoplasmic. The chain crosses the membrane as a helical span at residues 36–55 (KSYLVVGSTIFYLLLIFINV). Residues 56-57 (GG) are Lumenal-facing. Residues 58-78 (IGEILGNFAGFVIPAYYSILA) form a helical membrane-spanning segment. Topologically, residues 79–88 (LKTTTTKDDT) are cytoplasmic. The chain crosses the membrane as a helical span at residues 89–103 (QLLTYWIVFSFLNVI). At 104–108 (EFWSK) the chain is on the lumenal side. A helical membrane pass occupies residues 109-127 (ALLYIIPFYWFLKTIFLLY). Over 128–177 (IALPQTGGATMIYNRFISPLTDKYILGPKKTDGVQQSVKEASRATGAATH) the chain is Cytoplasmic.

The protein belongs to the DP1 family. As to quaternary structure, oligomer.

Its subcellular location is the endoplasmic reticulum membrane. The protein resides in the golgi apparatus membrane. Required to generate and maintain the structure of the tubular endoplasmic reticulum network and the vacuole. Induces high curvature in membranes and causes membrane tubule formation. Involved in membrane/vesicle trafficking. In Candida glabrata (strain ATCC 2001 / BCRC 20586 / JCM 3761 / NBRC 0622 / NRRL Y-65 / CBS 138) (Yeast), this protein is Protein YOP1 (YOP1).